Consider the following 106-residue polypeptide: ATP synthase-coupling factor 6, mitochondrial (106 aa).

This sequence belongs to the eukaryotic ATPase subunit F6 family. As to quaternary structure, F-type ATPases have 2 components, CF(1) - the catalytic core - and CF(0) - the membrane proton channel. CF(0) seems to have nine subunits: a, b, c, d, e, f, g, F6 and 8 (or A6L).

The protein localises to the mitochondrion. Its subcellular location is the mitochondrion inner membrane. In terms of biological role, mitochondrial membrane ATP synthase (F(1)F(0) ATP synthase or Complex V) produces ATP from ADP in the presence of a proton gradient across the membrane which is generated by electron transport complexes of the respiratory chain. F-type ATPases consist of two structural domains, F(1) - containing the extramembraneous catalytic core and F(0) - containing the membrane proton channel, linked together by a central stalk and a peripheral stalk. During catalysis, ATP synthesis in the catalytic domain of F(1) is coupled via a rotary mechanism of the central stalk subunits to proton translocation. Part of the complex F(0) domain and the peripheric stalk, which acts as a stator to hold the catalytic alpha(3)beta(3) subcomplex and subunit a/ATP6 static relative to the rotary elements. The polypeptide is ATP synthase-coupling factor 6, mitochondrial (Drosophila melanogaster (Fruit fly)).